The primary structure comprises 142 residues: Hemoglobin subunit alpha (142 aa).

Positions 2-142 constitute a Globin domain; the sequence is VLSAADKGNV…VSTVLTSKYR (141 aa). At S4 the chain carries Phosphoserine. N6-succinyllysine is present on residues K8 and K12. The residue at position 17 (K17) is an N6-acetyllysine; alternate. K17 bears the N6-succinyllysine; alternate mark. At Y25 the chain carries Phosphotyrosine. S36 is modified (phosphoserine). N6-succinyllysine is present on K41. Residue S50 is modified to Phosphoserine. H59 is an O2 binding site. H88 contributes to the heme b binding site. S103 is subject to Phosphoserine. The residue at position 109 (T109) is a Phosphothreonine. S125 carries the phosphoserine modification. Phosphothreonine occurs at positions 135 and 138. S139 carries the post-translational modification Phosphoserine.

It belongs to the globin family. Heterotetramer of two alpha chains and two beta chains. As to expression, red blood cells.

In terms of biological role, involved in oxygen transport from the lung to the various peripheral tissues. Its function is as follows. Hemopressin acts as an antagonist peptide of the cannabinoid receptor CNR1. Hemopressin-binding efficiently blocks cannabinoid receptor CNR1 and subsequent signaling. This is Hemoglobin subunit alpha (HBA) from Bos taurus (Bovine).